Here is a 578-residue protein sequence, read N- to C-terminus: Arginine--tRNA ligase (578 aa).

A 'HIGH' region motif is present at residues 123-133 (PNIAKEMHVGH).

It belongs to the class-I aminoacyl-tRNA synthetase family. In terms of assembly, monomer.

The protein localises to the cytoplasm. It carries out the reaction tRNA(Arg) + L-arginine + ATP = L-arginyl-tRNA(Arg) + AMP + diphosphate. This is Arginine--tRNA ligase from Baumannia cicadellinicola subsp. Homalodisca coagulata.